The primary structure comprises 344 residues: Probable pectinesterase 67 (344 aa).

The first 23 residues, 1-23 (MGHRTRMILVLTLVVMSIWGSDA), serve as a signal peptide directing secretion. N-linked (GlcNAc...) asparagine glycosylation is found at Asn-43 and Asn-151. Position 152 (Gln-152) interacts with substrate. Catalysis depends on Asp-196, which acts as the Nucleophile. Arg-256 is a binding site for substrate. N-linked (GlcNAc...) asparagine glycosylation is present at Asn-282.

This sequence belongs to the pectinesterase family. Expressed in flower buds.

Its subcellular location is the secreted. It localises to the cell wall. The enzyme catalyses [(1-&gt;4)-alpha-D-galacturonosyl methyl ester](n) + n H2O = [(1-&gt;4)-alpha-D-galacturonosyl](n) + n methanol + n H(+). It participates in glycan metabolism; pectin degradation; 2-dehydro-3-deoxy-D-gluconate from pectin: step 1/5. Acts in the modification of cell walls via demethylesterification of cell wall pectin. The chain is Probable pectinesterase 67 (PME67) from Arabidopsis thaliana (Mouse-ear cress).